Here is a 1355-residue protein sequence, read N- to C-terminus: Phospholipid-transporting ATPase DRS2 (1355 aa).

The span at Met-1–Glu-15 shows a compositional bias: basic and acidic residues. Positions Met-1–Pro-50 are disordered. The tract at residues Met-1–Arg-104 is involved in autoinhibition. Residues Met-1–Glu-221 are Cytoplasmic-facing. A compositionally biased stretch (acidic residues) spans Asp-16 to Asp-26. The segment covering Ser-30–Asn-44 has biased composition (polar residues). A Phosphoserine modification is found at Ser-102. Residues Phe-222–Val-242 traverse the membrane as a helical segment. Positions Gln-237–Gln-238 are involved in phosphatidylserine substrate recognition. Residues Ser-243 to Asn-246 lie on the Lumenal side of the membrane. Residues Arg-247–Ile-267 traverse the membrane as a helical segment. At Glu-268–Ile-449 the chain is on the cytoplasmic side. A helical membrane pass occupies residues Ala-450–Ser-470. Topologically, residues Thr-471–Leu-490 are lumenal. The chain crosses the membrane as a helical span at residues Phe-491–Phe-511. The Cytoplasmic portion of the chain corresponds to Val-512 to Ile-1012. The 4-aspartylphosphate intermediate role is filled by Asp-560. 15 residues coordinate ATP: Asp-560, Lys-561, Thr-562, Glu-655, Phe-698, Ser-700, Lys-703, Lys-721, Arg-755, Thr-756, Thr-835, Gly-836, Asp-837, Arg-928, and Lys-934. Asp-560 lines the Mg(2+) pocket. Thr-562 provides a ligand contact to Mg(2+). Asp-954 is a binding site for Mg(2+). ATP contacts are provided by Asn-957 and Asp-958. Asp-958 contributes to the Mg(2+) binding site. A helical membrane pass occupies residues Leu-1013–Asn-1033. Residues Ala-1034–Ser-1043 are Lumenal-facing. A helical membrane pass occupies residues Trp-1044–Phe-1064. Residues Asp-1065–Phe-1094 are Cytoplasmic-facing. Residues Trp-1095–Ile-1115 traverse the membrane as a helical segment. Residues Tyr-1116–His-1131 are Lumenal-facing. Residues Trp-1132 to Leu-1152 traverse the membrane as a helical segment. Lys-1149 lines the a 1,2-diacyl-sn-glycero-3-phospho-(1D-myo-inositol 4-phosphate) pocket. The Cytoplasmic segment spans residues Val-1153 to Thr-1161. The chain crosses the membrane as a helical span at residues Leu-1162–Ile-1182. Topologically, residues Phe-1183–Ser-1202 are lumenal. A helical transmembrane segment spans residues Gly-1203–Trp-1223. Positions 1219, 1223, 1224, 1235, and 1236 each coordinate a 1,2-diacyl-sn-glycero-3-phospho-(1D-myo-inositol 4-phosphate). At Lys-1224–Ile-1355 the chain is on the cytoplasmic side. The interval Tyr-1230–Glu-1282 is interaction with GEA2. The segment at Glu-1231–Ala-1309 is involved in autoinhibition. Residues Gln-1305–Ile-1355 form a disordered region. Polar residues predominate over residues Ala-1307–Phe-1323. Residues Ser-1346–Ile-1355 show a composition bias toward basic and acidic residues.

It belongs to the cation transport ATPase (P-type) (TC 3.A.3) family. Type IV subfamily. Component of a flippase complex consisting of DRS2 and CDC50. Interacts with CDC50; the interaction is direct, is required for their mutual export from the endoplasmic reticulum, and preferentially occurs when DRS2 is in the E2P state. Interacts (via C-terminus) with GEA2 (via SEC7 domain); the interaction is direct. Interacts with GEA1. It depends on Mg(2+) as a cofactor.

Its subcellular location is the golgi apparatus. The protein localises to the trans-Golgi network membrane. The protein resides in the endosome membrane. It catalyses the reaction ATP + H2O + phospholipidSide 1 = ADP + phosphate + phospholipidSide 2.. It carries out the reaction a 1,2-diacyl-sn-glycero-3-phospho-L-serine(out) + ATP + H2O = a 1,2-diacyl-sn-glycero-3-phospho-L-serine(in) + ADP + phosphate + H(+). The enzyme catalyses a 1,2-diacyl-sn-glycero-3-phosphoethanolamine(out) + ATP + H2O = a 1,2-diacyl-sn-glycero-3-phosphoethanolamine(in) + ADP + phosphate + H(+). Allosterically activated by binding 1,2-diacyl-sn-glycero-3-phospho-(1D-myo-inositol 4-phosphate) (phosphatidylinositol 4-phosphate). Inhibited by orthovanadate, N-ethylmaleimide, trifluoroberyllate and tetrafluoroaluminate; orthovanadate and N-ethylmaleimide inhibit phosphorylation of the active site aspartic acid. The ATPase activity is not potently stimulated by phosphatidylinositol 3-phosphate and phosphatidylinositol 5-phosphate, phosphatidylinositol 4,5-bisphosphate or phosphatidylcholine. Not inhibited by azide. Functionally, catalytic component of a P4-ATPase flippase complex which catalyzes the hydrolysis of ATP coupled to the transport of phosphatidylserine and small amounts of ethanolamine from the lumen to the cytosolic leaflet of the trans-Golgi network and ensures the maintenance of asymmetric distribution of phospholipids. Contributes to clathrin-coated vesicle formation, endocytosis, and protein trafficking between the Golgi and endosomal system. Does not appear to transport phosphatidylcholine or sphingomyelin. This is Phospholipid-transporting ATPase DRS2 from Saccharomyces cerevisiae (strain ATCC 204508 / S288c) (Baker's yeast).